A 332-amino-acid polypeptide reads, in one-letter code: Anthranilate phosphoribosyltransferase (332 aa).

5-phospho-alpha-D-ribose 1-diphosphate-binding positions include Gly-79, 82–83 (GD), Thr-87, 89–92 (NIST), 107–115 (KHGNRSVSS), and Ser-119. Anthranilate is bound at residue Gly-79. Ser-91 is a Mg(2+) binding site. Anthranilate is bound at residue Asn-110. Residue Arg-165 coordinates anthranilate. Asp-223 and Glu-224 together coordinate Mg(2+).

It belongs to the anthranilate phosphoribosyltransferase family. As to quaternary structure, homodimer. It depends on Mg(2+) as a cofactor.

It catalyses the reaction N-(5-phospho-beta-D-ribosyl)anthranilate + diphosphate = 5-phospho-alpha-D-ribose 1-diphosphate + anthranilate. Its pathway is amino-acid biosynthesis; L-tryptophan biosynthesis; L-tryptophan from chorismate: step 2/5. In terms of biological role, catalyzes the transfer of the phosphoribosyl group of 5-phosphorylribose-1-pyrophosphate (PRPP) to anthranilate to yield N-(5'-phosphoribosyl)-anthranilate (PRA). This Vibrio vulnificus (strain CMCP6) protein is Anthranilate phosphoribosyltransferase.